A 153-amino-acid chain; its full sequence is ATP synthase subunit b' (153 aa).

Residues 20–40 (TLPLMAAQVVLLTFILNALFF) form a helical membrane-spanning segment.

It belongs to the ATPase B chain family. In terms of assembly, F-type ATPases have 2 components, F(1) - the catalytic core - and F(0) - the membrane proton channel. F(1) has five subunits: alpha(3), beta(3), gamma(1), delta(1), epsilon(1). F(0) has four main subunits: a(1), b(1), b'(1) and c(10-14). The alpha and beta chains form an alternating ring which encloses part of the gamma chain. F(1) is attached to F(0) by a central stalk formed by the gamma and epsilon chains, while a peripheral stalk is formed by the delta, b and b' chains.

It localises to the cellular thylakoid membrane. F(1)F(0) ATP synthase produces ATP from ADP in the presence of a proton or sodium gradient. F-type ATPases consist of two structural domains, F(1) containing the extramembraneous catalytic core and F(0) containing the membrane proton channel, linked together by a central stalk and a peripheral stalk. During catalysis, ATP synthesis in the catalytic domain of F(1) is coupled via a rotary mechanism of the central stalk subunits to proton translocation. Functionally, component of the F(0) channel, it forms part of the peripheral stalk, linking F(1) to F(0). The b'-subunit is a diverged and duplicated form of b found in plants and photosynthetic bacteria. This chain is ATP synthase subunit b', found in Prochlorococcus marinus (strain SARG / CCMP1375 / SS120).